The chain runs to 761 residues: 3'-5' RNA nuclease TATDN2 (761 aa).

Disordered regions lie at residues 1–90 (MASE…HFLG), 135–181 (CSLK…LRDQ), 197–294 (KSMP…RRTV), 318–337 (KDREVVMEHPSSGSDWSDVE), 343–364 (RFSQEEPVSLKPSAVPEPSSFT), and 388–486 (SSPK…PKSH). 2 stretches are compositionally biased toward low complexity: residues 33–52 (APSSRPAQRSASRSGGPSSP) and 66–85 (SRRLSWGSSRRRNNSSSSFS). The span at 247-294 (QKEKDATPEVSMEEDKTVPERSSFYDRRVVIDPQEKPSEEPLGDRRTV) shows a compositional bias: basic and acidic residues. A compositionally biased stretch (low complexity) spans 388–402 (SSPKPSSYPSTGSSS). Residues 417–431 (SDYSPNSTGSVQNTS) show a composition bias toward polar residues. Over residues 452 to 470 (RSSEEREVKEKRTFQEEMP) the composition is skewed to basic and acidic residues. H499, H501, E593, H630, H655, and D707 together coordinate a divalent metal cation.

Belongs to the metallo-dependent hydrolases superfamily. TatD-type hydrolase family. Mg(2+) serves as cofactor.

The protein localises to the nucleus. Functionally, mg(2+)-dependent 3'RNA exonuclease and endonuclease that resolves R-loops via specific degradation of R-loop RNA stucture. Shows no activity against D-loop and minimal activity against the RNA strand of an RNA-DNA hybrid duplex oligomer. Has no 3' or 5' exonuclease activity, no uracil glycosylase activity, and no 5' flap endonuclease activity on DNA substrates. May have a role in maintaining genomic stability through its role in R-loop resolution. This Homo sapiens (Human) protein is 3'-5' RNA nuclease TATDN2 (TATDN2).